The following is a 481-amino-acid chain: MGFHQILVTVVALALASVRAEFPSRTDSPTDCPEADQGCWCRGSFAQCWRTYEEAGMTGEIGNRITKLDLLYQPSEEIVTYIRRSSAMRELRISEDGVSLDCSCDLIYALDDKHVTLVDQAELTFSNCQQRGWPRDSMTARSFVNRCHVSRMQDGDLRKRRESEDVDDDDVSKRASPRKGDEPAGHTLKDLAPQNTNHLVSIDGADKHPADELVNFISGHSPTRRATDNDAAVSDDSKRGARKKRYVNTMGYPQAMSPQMGGVNYGQPAQQGYGAQGMGGPVGGGPMGGPPQFGALPPGQADTDFGSSSSSVDGGDTTISARVMDDIKAVLGATKIDLPVDINDPYDLGLLLRHLRHHSNLLANIGDPAVREQVLSAMQEEEEEEEEDAATGAQQGVLNGNAPGQAGFGGGGGGGAMMSPQQMGGQPQGMIGQPQGMGFPHEGMGGPPQGMGMPHQGMGGPPQGMGMPPQGQPYGQGYLQG.

The first 20 residues, 1–20 (MGFHQILVTVVALALASVRA), serve as a signal peptide directing secretion. Residues 21 to 245 (EFPSRTDSPT…DSKRGARKKR (225 aa)) constitute a propeptide that is removed on maturation. 2 stretches are compositionally biased toward basic and acidic residues: residues 154-163 (DGDLRKRRES) and 178-189 (RKGDEPAGHTLK). 2 disordered regions span residues 154-193 (DGDL…DLAP) and 219-243 (GHSP…GARK). Residues 352–360 (LRHLRHHSN) are fucose-binding domain. A disordered region spans residues 376 to 481 (SAMQEEEEEE…QPYGQGYLQG (106 aa)). Residues 379-389 (QEEEEEEEEDA) are compositionally biased toward acidic residues. The segment covering 406-416 (AGFGGGGGGGA) has biased composition (gly residues). Composition is skewed to low complexity over residues 417-440 (MMSP…MGFP) and 464-481 (GMGM…YLQG).

Belongs to the bindin family.

It localises to the cytoplasmic vesicle. The protein resides in the secretory vesicle. Its subcellular location is the acrosome lumen. Its function is as follows. Species-specific sea urchin sperm protein required for adhesion of sperm to the egg surface during fertilization. Bindin coats the acrosomal process after it is externalized by the acrosome reaction. It binds to sulfated, fucose-containing polysaccharides on the vitelline layer receptor proteoglycans which cover the egg plasma membrane. The sequence is that of Bindin from Strongylocentrotus purpuratus (Purple sea urchin).